A 169-amino-acid chain; its full sequence is Gamma-crystallin 2 (169 aa).

Beta/gamma crystallin 'Greek key' domains lie at 1-34 (YEDR…KVDS) and 35-77 (GCWM…KVIP). The connecting peptide stretch occupies residues 78-82 (QQKGP). Beta/gamma crystallin 'Greek key' domains are found at residues 83-123 (HKMK…NVLE) and 124-166 (GHWI…RRVL).

It belongs to the beta/gamma-crystallin family. In terms of assembly, monomer.

Functionally, crystallins are the dominant structural components of the vertebrate eye lens. The protein is Gamma-crystallin 2 of Rana temporaria (European common frog).